Here is a 100-residue protein sequence, read N- to C-terminus: Large ribosomal subunit protein uL23 (100 aa).

The protein belongs to the universal ribosomal protein uL23 family. Part of the 50S ribosomal subunit. Contacts protein L29, and trigger factor when it is bound to the ribosome.

Its function is as follows. One of the early assembly proteins it binds 23S rRNA. One of the proteins that surrounds the polypeptide exit tunnel on the outside of the ribosome. Forms the main docking site for trigger factor binding to the ribosome. This Mycolicibacterium gilvum (strain PYR-GCK) (Mycobacterium gilvum (strain PYR-GCK)) protein is Large ribosomal subunit protein uL23.